The following is a 761-amino-acid chain: Disintegrin and metalloproteinase domain-containing protein 24 (761 aa).

The N-terminal stretch at methionine 1–cysteine 34 is a signal peptide. Residues alanine 35–tyrosine 200 constitute a propeptide that is removed on maturation. At alanine 35–asparagine 697 the chain is on the extracellular side. Asparagine 140 is a glycosylation site (N-linked (GlcNAc...) asparagine). A Cysteine switch motif is present at residues methionine 172–glutamate 179. A Zn(2+)-binding site is contributed by cysteine 174. One can recognise a Peptidase M12B domain in the interval leucine 208–proline 400. N-linked (GlcNAc...) asparagine glycans are attached at residues asparagine 227 and asparagine 301. 7 disulfide bridges follow: cysteine 323-cysteine 393, cysteine 357-cysteine 379, cysteine 359-cysteine 364, cysteine 465-cysteine 485, cysteine 635-cysteine 646, cysteine 640-cysteine 652, and cysteine 654-cysteine 663. A Zn(2+)-binding site is contributed by histidine 342. Glutamate 343 is an active-site residue. Positions 346 and 352 each coordinate Zn(2+). N-linked (GlcNAc...) asparagine glycans are attached at residues asparagine 378, asparagine 390, and asparagine 479. A Disintegrin domain is found at leucine 406 to aspartate 493. An EGF-like domain is found at tryptophan 631–glutamine 664. A helical membrane pass occupies residues valine 698 to leucine 718. The Cytoplasmic segment spans residues serine 719–proline 761. The segment at serine 725–proline 761 is disordered.

In terms of assembly, monomer. The cofactor is Zn(2+). The prodomain is removed during sperm passage through the caput epididymis after the protein has reached the cell surface. Not processed in the secretory pathway. Expressed exclusively in testis and more specifically on the surface of mature sperm (at protein level).

Its subcellular location is the membrane. Functionally, plasma membrane protease present on mature sperm that may be involved in sperm function during epididymal maturation and/or fertilization. In Mus musculus (Mouse), this protein is Disintegrin and metalloproteinase domain-containing protein 24.